We begin with the raw amino-acid sequence, 192 residues long: Peptide deformylase (192 aa).

Residues Cys-102 and His-145 each coordinate Fe cation. Glu-146 is an active-site residue. His-149 lines the Fe cation pocket.

The protein belongs to the polypeptide deformylase family. Fe(2+) is required as a cofactor.

It carries out the reaction N-terminal N-formyl-L-methionyl-[peptide] + H2O = N-terminal L-methionyl-[peptide] + formate. Its function is as follows. Removes the formyl group from the N-terminal Met of newly synthesized proteins. Requires at least a dipeptide for an efficient rate of reaction. N-terminal L-methionine is a prerequisite for activity but the enzyme has broad specificity at other positions. The chain is Peptide deformylase from Thermus thermophilus (strain ATCC BAA-163 / DSM 7039 / HB27).